A 158-amino-acid chain; its full sequence is Cytochrome c-type biogenesis protein CcmE (158 aa).

Polar residues predominate over residues 1-11; sequence MTRPDSGSSPA. Positions 1–20 are disordered; the sequence is MTRPDSGSSPAPLSEARRRK. Topologically, residues 1–23 are cytoplasmic; it reads MTRPDSGSSPAPLSEARRRKRNP. The chain crosses the membrane as a helical; Signal-anchor for type II membrane protein span at residues 24 to 44; that stretch reads LPTVLGITALLGLAGFIAFGN. Residues 45 to 158 are Extracellular-facing; sequence LNKSLEYFVT…ELRDLLEQSE (114 aa). Heme is bound by residues His137 and Tyr141.

Belongs to the CcmE/CycJ family.

The protein localises to the cell membrane. Functionally, heme chaperone required for the biogenesis of c-type cytochromes. Transiently binds heme delivered by CcmC and transfers the heme to apo-cytochromes in a process facilitated by CcmF and CcmH. The sequence is that of Cytochrome c-type biogenesis protein CcmE from Deinococcus deserti (strain DSM 17065 / CIP 109153 / LMG 22923 / VCD115).